Reading from the N-terminus, the 325-residue chain is Glutarate 2-hydroxylase (325 aa).

Fe cation is bound by residues histidine 160, aspartate 162, and histidine 292.

Belongs to the glutarate hydroxylase family. In terms of assembly, homotetramer. It depends on Fe(2+) as a cofactor.

It catalyses the reaction glutarate + 2-oxoglutarate + O2 = (S)-2-hydroxyglutarate + succinate + CO2. The protein operates within amino-acid degradation. Functionally, acts as an alpha-ketoglutarate-dependent dioxygenase catalyzing hydroxylation of glutarate (GA) to L-2-hydroxyglutarate (L2HG). Functions in a L-lysine degradation pathway that proceeds via cadaverine, glutarate and L-2-hydroxyglutarate. This chain is Glutarate 2-hydroxylase, found in Escherichia coli (strain K12 / MC4100 / BW2952).